A 475-amino-acid chain; its full sequence is MAGRPHPYDGNSSDPENWDRKLHSRPRKLYKHSSTSSRIAKGGVDHTKMSLHGASGGHERSRDRRRSSDRSRDSSHERTESQLTPCIRNVTSPTRQHHVEREKDHSSSRPSSPRPQKASPNGSISSAGNSSRNSSQSSSDGSCKTAGEMVFVYENAKEGARNIRTSERVTLIVDNTRFVVDPSIFTAQPNTMLGRMFGSGREHNFTRPNEKGEYEVAEGIGSTVFRAILDYYKTGIIRCPDGISIPELREACDYLCISFEYSTIKCRDLSALMHELSNDGARRQFEFYLEEMILPLMVASAQSGERECHIVVLTDDDVVDWDEEYPPQMGEEYSQIIYSTKLYRFFKYIENRDVAKSVLKERGLKKIRLGIEGYPTYKEKVKKRPGGRPEVIYNYVQRPFIRMSWEKEEGKSRHVDFQCVKSKSITNLAAAAADIPQDQLVVMHPTPQVDELDILPIHPPSGNSDLDPDAQNPTL.

The interval 1–143 (MAGRPHPYDG…SSQSSSDGSC (143 aa)) is disordered. A compositionally biased stretch (basic residues) spans 22 to 31 (LHSRPRKLYK). A compositionally biased stretch (basic and acidic residues) spans 57–80 (GHERSRDRRRSSDRSRDSSHERTE). The span at 81-94 (SQLTPCIRNVTSPT) shows a compositional bias: polar residues. Basic and acidic residues predominate over residues 97 to 107 (HHVEREKDHSS). Positions 108-142 (SRPSSPRPQKASPNGSISSAGNSSRNSSQSSSDGS) are enriched in low complexity. Positions 146–475 (AGEMVFVYEN…LDPDAQNPTL (330 aa)) are interaction with AKT family members. One can recognise a BTB domain in the interval 167–241 (ERVTLIVDNT…YKTGIIRCPD (75 aa)). The tract at residues 456–475 (PIHPPSGNSDLDPDAQNPTL) is disordered.

As to quaternary structure, interacts (via C-terminal 330-amino-acid region) with AKT1; AKT2 and AKT3. Interacts with PPP2CA and PPP1CA.

It localises to the nucleus. Its subcellular location is the cytoplasm. Its function is as follows. Plays a major role as an activator of AKT family members by inhibiting PPP2CA-mediated dephosphorylation, thereby keeping AKTs activated. Plays a role in preventing motor neuronal death and in accelerating the growth of pancreatic beta cells. The chain is BTB/POZ domain-containing protein 10 (BTBD10) from Pongo abelii (Sumatran orangutan).